Consider the following 469-residue polypeptide: Glutamate--tRNA ligase (469 aa).

The short motif at 11–21 (PSPTGFIHLGN) is the 'HIGH' region element. The 'KMSKS' region motif lies at 243–247 (KMSKR). Lys246 lines the ATP pocket.

The protein belongs to the class-I aminoacyl-tRNA synthetase family. Glutamate--tRNA ligase type 1 subfamily. In terms of assembly, monomer.

It localises to the cytoplasm. The catalysed reaction is tRNA(Glu) + L-glutamate + ATP = L-glutamyl-tRNA(Glu) + AMP + diphosphate. Its function is as follows. Catalyzes the attachment of glutamate to tRNA(Glu) in a two-step reaction: glutamate is first activated by ATP to form Glu-AMP and then transferred to the acceptor end of tRNA(Glu). This is Glutamate--tRNA ligase from Burkholderia cenocepacia (strain ATCC BAA-245 / DSM 16553 / LMG 16656 / NCTC 13227 / J2315 / CF5610) (Burkholderia cepacia (strain J2315)).